A 101-amino-acid polypeptide reads, in one-letter code: Small ribosomal subunit protein uS14 (101 aa).

Belongs to the universal ribosomal protein uS14 family. As to quaternary structure, part of the 30S ribosomal subunit. Contacts proteins S3 and S10.

Functionally, binds 16S rRNA, required for the assembly of 30S particles and may also be responsible for determining the conformation of the 16S rRNA at the A site. The polypeptide is Small ribosomal subunit protein uS14 (Vibrio vulnificus (strain CMCP6)).